The sequence spans 268 residues: Adenosylcobinamide-GDP ribazoletransferase (268 aa).

The next 8 helical transmembrane spans lie at 1–21, 36–56, 59–79, 112–132, 138–158, 182–202, 212–232, and 244–264; these read MAGN…TLPV, YLFI…GTLF, ILPA…LTGI, AGGL…AMTF, WLFV…ITII, LAAV…AAII, IMAG…ILII, and VIGA…GAVL.

Belongs to the CobS family. It depends on Mg(2+) as a cofactor.

The protein resides in the cell membrane. The enzyme catalyses alpha-ribazole + adenosylcob(III)inamide-GDP = adenosylcob(III)alamin + GMP + H(+). It carries out the reaction alpha-ribazole 5'-phosphate + adenosylcob(III)inamide-GDP = adenosylcob(III)alamin 5'-phosphate + GMP + H(+). Its pathway is cofactor biosynthesis; adenosylcobalamin biosynthesis; adenosylcobalamin from cob(II)yrinate a,c-diamide: step 7/7. In terms of biological role, joins adenosylcobinamide-GDP and alpha-ribazole to generate adenosylcobalamin (Ado-cobalamin). Also synthesizes adenosylcobalamin 5'-phosphate from adenosylcobinamide-GDP and alpha-ribazole 5'-phosphate. In Methanocella arvoryzae (strain DSM 22066 / NBRC 105507 / MRE50), this protein is Adenosylcobinamide-GDP ribazoletransferase.